The primary structure comprises 1125 residues: Phytochrome A (1125 aa).

Composition is skewed to low complexity over residues 1-14 and 39-48; these read MSSSRPSHSSSNSA and SGSSFDYSSS. 2 disordered regions span residues 1-22 and 38-64; these read MSSSRPSHSSSNSARSRHSARI and ESGSSFDYSSSVRVTDSVGGDQPPRSD. The GAF domain maps to 218 to 401; the sequence is SMERLCDTMV…VFAIHVNKEL (184 aa). C323 is a phytochromobilin binding site. PAS domains are found at residues 617-687 and 750-821; these read VTSE…LQGK and DYKA…VNLG. Residues 901-1117 form the Histidine kinase domain; the sequence is YLKKQIWNPL…SFIISVELAG (217 aa).

The protein belongs to the phytochrome family. As to quaternary structure, homodimer. Post-translationally, contains one covalently linked phytochromobilin chromophore.

Its function is as follows. Regulatory photoreceptor which exists in two forms that are reversibly interconvertible by light: the Pr form that absorbs maximally in the red region of the spectrum and the Pfr form that absorbs maximally in the far-red region. Photoconversion of Pr to Pfr induces an array of morphogenic responses, whereas reconversion of Pfr to Pr cancels the induction of those responses. Pfr controls the expression of a number of nuclear genes including those encoding the small subunit of ribulose-bisphosphate carboxylase, chlorophyll A/B binding protein, protochlorophyllide reductase, rRNA, etc. It also controls the expression of its own gene(s) in a negative feedback fashion. This chain is Phytochrome A (PHYA), found in Populus tremuloides (Quaking aspen).